We begin with the raw amino-acid sequence, 476 residues long: Zinc finger CCCH domain-containing protein 6 (476 aa).

A compositionally biased stretch (low complexity) spans 1 to 10 (MEQPHAAAAA). Residues 1-57 (MEQPHAAAAAAGGGEGEGGASPDTGLEGPMWRMGLGGGGGGGGGGGGGDGDAAGRLP) form a disordered region. Positions 34 to 51 (GLGGGGGGGGGGGGGDGD) are enriched in gly residues. 3 C3H1-type zinc fingers span residues 59 to 87 (RPGEEDCVYYLRTGACGFGDRCRYNHPRD), 108 to 136 (RAGQPICEYYMKTGTCKFGTNCKYHHPKQ), and 153 to 181 (RLGEKECSYYMKTGQCKFGTTCKFHHPEF). Over residues 290–301 (SSTGQSSNNQQE) the composition is skewed to polar residues. The interval 290 to 309 (SSTGQSSNNQQEHGFPERPG) is disordered. 2 C3H1-type zinc fingers span residues 307–335 (RPGQPDCQYYMRTGDCKFGATCKYHHPRE) and 353–381 (RPGAQPCAYYAQNGYCRYGVACKYDHPMG). A disordered region spans residues 456-476 (TMMRAQTNTTSGGSSSPGGGR).

The protein resides in the nucleus. This Oryza sativa subsp. japonica (Rice) protein is Zinc finger CCCH domain-containing protein 6.